The sequence spans 891 residues: Alanine--tRNA ligase (891 aa).

The Zn(2+) site is built by H564, H568, C677, and H681.

The protein belongs to the class-II aminoacyl-tRNA synthetase family. The cofactor is Zn(2+).

Its subcellular location is the cytoplasm. It carries out the reaction tRNA(Ala) + L-alanine + ATP = L-alanyl-tRNA(Ala) + AMP + diphosphate. Functionally, catalyzes the attachment of alanine to tRNA(Ala) in a two-step reaction: alanine is first activated by ATP to form Ala-AMP and then transferred to the acceptor end of tRNA(Ala). Also edits incorrectly charged Ser-tRNA(Ala) and Gly-tRNA(Ala) via its editing domain. The protein is Alanine--tRNA ligase of Rhodopseudomonas palustris (strain BisA53).